A 1525-amino-acid polypeptide reads, in one-letter code: Multidrug resistance protein mrp-7 (1525 aa).

Over 1–24 the chain is Extracellular; that stretch reads MLSSFCGDGHPFSTGLPNVSICAQ. An N-linked (GlcNAc...) asparagine glycan is attached at N18. Residues 25-45 traverse the membrane as a helical segment; sequence HTVLVWVPAAFFLLTLPFLSA. The Cytoplasmic portion of the chain corresponds to 46–66; that stretch reads QCHLTAQRFARLPFSAHFIIK. A helical transmembrane segment spans residues 67–87; that stretch reads LLLVAFLAANSLATWCYVLFS. The Extracellular segment spans residues 88–94; that stretch reads KNSYAAA. A helical transmembrane segment spans residues 95-115; that stretch reads YYVYPGLWVLVWTGTFLVHLI. Over 116 to 118 the chain is Cytoplasmic; the sequence is RLR. A helical transmembrane segment spans residues 119 to 139; the sequence is CGLVSSGIQHVTSLIFLLCGA. Residues 140–165 lie on the Extracellular side of the membrane; that stretch reads PEFYQWIRMENSNSFPNDLTTTDSAQ. The helical transmembrane segment at 166–186 threads the bilayer; that stretch reads FLSIAYLSWYSALILYTFSLC. Residues 187–346 lie on the Cytoplasmic side of the membrane; sequence FADPRGAKTD…APFWKGMALS (160 aa). The ABC transmembrane type-1 1 domain occupies 305 to 587; that stretch reads LLASTLKFVS…IALLINQAVQ (283 aa). Residues 347–367 form a helical membrane-spanning segment; the sequence is ILMFSVSELRSLILNGYFYIM. At 368-434 the chain is on the extracellular side; that stretch reads FRMGTKIQTS…SCPYQITFAL (67 aa). A helical membrane pass occupies residues 435–455; sequence VYLFITLGYSALPGVVIMVIF. Residues 456–535 are Cytoplasmic-facing; sequence VPMNIISSMI…NILDSFNTAS (80 aa). The chain crosses the membrane as a helical span at residues 536 to 556; it reads PFLVALFSFGTFVLSNPSHLL. Residues 557 to 561 are Extracellular-facing; that stretch reads TPQIA. The chain crosses the membrane as a helical span at residues 562 to 582; it reads FVSLALFNQLRSPMTMIALLI. Residues 583-953 are Cytoplasmic-facing; the sequence is NQAVQAVVSN…ATYQLYVKAA (371 aa). The ABC transporter 1 domain maps to 622–849; it reads VRVENLTASW…RGLFFDFMEE (228 aa). 659–666 contributes to the ATP binding site; sequence GKVGSGKS. The tract at residues 900 to 925 is disordered; it reads ELTTQISTMSSPEKPPTGTSPAAATE. Residues 954–974 traverse the membrane as a helical segment; that stretch reads GYLLSIAFIGFFIVYMTLQIL. Positions 959–1245 constitute an ABC transmembrane type-1 2 domain; sequence IAFIGFFIVY…AVRQVSEIEA (287 aa). Topologically, residues 975–1005 are extracellular; that stretch reads RSFWLSAWSDEYDPDSPSAHPMAKGWRLGVY. The chain crosses the membrane as a helical span at residues 1006 to 1026; sequence GALGFSETACFFVALLALVFV. Residues 1027–1068 lie on the Cytoplasmic side of the membrane; it reads GQRASKNLHGPLIHNLMRSPMSFYDTTPLGRILNRCAKDIET. The helical transmembrane segment at 1069-1089 threads the bilayer; the sequence is IDMMLPMNFRYLVMCVLQVAF. Residue T1090 is a topological domain, extracellular. A helical membrane pass occupies residues 1091 to 1111; that stretch reads LIVIIISTPLFAVVILPLALI. Residues 1112-1184 are Cytoplasmic-facing; sequence YLIFLRYYVP…RYSSLVSNRW (73 aa). Residues 1185-1205 form a helical membrane-spanning segment; it reads LAVRLEFVGNCIIFFAALFAV. The Extracellular portion of the chain corresponds to 1206 to 1525; it reads LSKEFGWITS…ADAAEQDKHE (320 aa). Residue N1228 is glycosylated (N-linked (GlcNAc...) asparagine). Residues 1282–1516 enclose the ABC transporter 2 domain; the sequence is VKFDGYSTRY…KNSAFAKMVA (235 aa). Residue 1316–1323 coordinates ATP; sequence GRTGAGKS. N-linked (GlcNAc...) asparagine glycans are attached at residues N1358 and N1418.

The protein belongs to the ABC transporter superfamily. ABCC family. Conjugate transporter (TC 3.A.1.208) subfamily. In terms of tissue distribution, expressed in head neurons, including the dopamine (DA) motor neuron, and other cells in the body.

The protein resides in the cell membrane. Functionally, negatively regulates cellular toxicity by mediating the export of environmental toxicants such as methylmercury out of the cell. Plays a role in inhibiting methylmercury-induced dopamine (DA) motor neuron degeneration. Not involved in Mn(2+)- or Al(3+)-associated toxicity. This Caenorhabditis elegans protein is Multidrug resistance protein mrp-7.